Here is a 791-residue protein sequence, read N- to C-terminus: KN motif and ankyrin repeat domain-containing protein 3 (791 aa).

Disordered stretches follow at residues 1–37 (MAKFVLNQNLPDLGGPPLYPGPTGSARSPSSPYSVET), 56–181 (RGPA…GPAQ), 254–312 (ATSD…ETRE), 401–425 (GCTEKTTQTELPVENQPRPTAGDEM), and 463–514 (YESS…GDCE). Residues 25-34 (SARSPSSPYS) show a composition bias toward polar residues. Residues 105–125 (LSPGAFPGLSLPPLSPRSLSR) are compositionally biased toward low complexity. Residues 127 to 149 (PRVEHTLLETSRRLEQAQARERA) are compositionally biased toward basic and acidic residues. Ser151, Ser159, Ser163, Ser166, Ser167, and Ser176 each carry phosphoserine. Residues 158–180 (RSPRGSGRSSPAPNPALASPGPA) show a composition bias toward low complexity. Residues 180-229 (AQLQLVREQMAAALRRLRELEDQARALPELQEQVRALRAEKARLLAGRVQ) are a coiled coil. 2 stretches are compositionally biased toward basic and acidic residues: residues 254–280 (ATSDRGVRSRASPRAEDPDGLAARRSE) and 293–312 (PDGEPRTRETGTEVVPETRE). The residue at position 279 (Ser279) is a Phosphoserine. The segment covering 401–410 (GCTEKTTQTE) has biased composition (polar residues). Residues 485–496 (SSSSGSDDSSGG) show a composition bias toward low complexity. Residues 505–514 (HNDKDAGDCE) are compositionally biased toward basic and acidic residues. ANK repeat units follow at residues 606-636 (NGNTALHYSVSHGNLAISSLLLDTGVCDVNH), 640-677 (AGYSALMLAALTSVGQEEEDMAVAQRLFSMGDVNAKAS), 679-708 (TGQTALMLAISHGHQDMVAALLECGADVNV), 712-742 (DGATALMCASEYGRLDTVQLLLAQPGCDLTI), and 746-775 (EGTSALAIALEAEQDEVAALLHAHLTSNHQ). Residues 772–783 (SNHQGQSSTGSP) are compositionally biased toward polar residues. The segment at 772 to 791 (SNHQGQSSTGSPTAKECNDK) is disordered.

May be involved in the control of cytoskeleton formation by regulating actin polymerization. The sequence is that of KN motif and ankyrin repeat domain-containing protein 3 from Mus musculus (Mouse).